The following is a 268-amino-acid chain: Uronate dehydrogenase (268 aa).

Residues 17 to 18 (GL), 37 to 39 (DIS), 55 to 56 (DL), and 75 to 79 (FGGVS) each bind NAD(+). Residues Ser-79 and 115 to 117 (SNH) contribute to the substrate site. Tyr-140 (proton acceptor) is an active-site residue. Residue Lys-144 participates in NAD(+) binding. Ser-169 serves as a coordination point for substrate. Residue Ser-170 coordinates NAD(+). Arg-178 lines the substrate pocket.

It belongs to the NAD(P)-dependent epimerase/dehydratase family. As to quaternary structure, homohexamer.

It carries out the reaction beta-D-galacturonate + NAD(+) = D-galactaro-1,5-lactone + NADH + H(+). The enzyme catalyses beta-D-glucuronate + NAD(+) = D-glucaro-1,5-lactone + NADH + H(+). It functions in the pathway carbohydrate acid metabolism; D-galacturonate degradation via prokaryotic oxidative pathway. Functionally, catalyzes the oxidation of beta-D-galacturonate and beta-D-glucuronate to galactarate and D-glucarate, respectively. This is Uronate dehydrogenase (udh) from Pseudomonas putida (strain ATCC 47054 / DSM 6125 / CFBP 8728 / NCIMB 11950 / KT2440).